A 509-amino-acid chain; its full sequence is 4-aminobutyrate aminotransferase (509 aa).

Gly-166–Ser-167 serves as a coordination point for pyridoxal 5'-phosphate. Arg-223 lines the substrate pocket. Position 363 is an N6-(pyridoxal phosphate)lysine (Lys-363). Thr-387 is a pyridoxal 5'-phosphate binding site.

Belongs to the class-III pyridoxal-phosphate-dependent aminotransferase family. Homodimer. Pyridoxal 5'-phosphate is required as a cofactor.

The protein resides in the cytoplasm. The enzyme catalyses 4-aminobutanoate + 2-oxoglutarate = succinate semialdehyde + L-glutamate. In terms of biological role, deaminates gamma-aminobutyric acid (GABA) to succinate-semialdehyde, which in turn is converted to succinate by the succinate semialdehyde dehydrogenase. Not required for the utilization of GABA as nitrogen source. In Mycosarcoma maydis (Corn smut fungus), this protein is 4-aminobutyrate aminotransferase (GATA).